The sequence spans 309 residues: Porphobilinogen deaminase (309 aa).

C242 carries the post-translational modification S-(dipyrrolylmethanemethyl)cysteine.

The protein belongs to the HMBS family. Monomer. Requires dipyrromethane as cofactor.

The enzyme catalyses 4 porphobilinogen + H2O = hydroxymethylbilane + 4 NH4(+). It participates in porphyrin-containing compound metabolism; protoporphyrin-IX biosynthesis; coproporphyrinogen-III from 5-aminolevulinate: step 2/4. Tetrapolymerization of the monopyrrole PBG into the hydroxymethylbilane pre-uroporphyrinogen in several discrete steps. In Shewanella frigidimarina (strain NCIMB 400), this protein is Porphobilinogen deaminase.